The following is a 78-amino-acid chain: MSTIEERVKKIIVEQLGVKEDEVVNSASFVDDLGADSLDTVELVMALEEEFDTEIPDEEAEKITTVQAAIDYIEAANK.

The 76-residue stretch at 2–77 (STIEERVKKI…AAIDYIEAAN (76 aa)) folds into the Carrier domain. Position 37 is an O-(pantetheine 4'-phosphoryl)serine (S37).

It belongs to the acyl carrier protein (ACP) family. In terms of processing, 4'-phosphopantetheine is transferred from CoA to a specific serine of apo-ACP by AcpS. This modification is essential for activity because fatty acids are bound in thioester linkage to the sulfhydryl of the prosthetic group.

The protein resides in the cytoplasm. It participates in lipid metabolism; fatty acid biosynthesis. Its function is as follows. Carrier of the growing fatty acid chain in fatty acid biosynthesis. The protein is Acyl carrier protein of Edwardsiella ictaluri (strain 93-146).